The following is a 46-amino-acid chain: Hellethionin-D (46 aa).

Cystine bridges form between cysteine 3–cysteine 40, cysteine 4–cysteine 32, cysteine 12–cysteine 30, and cysteine 16–cysteine 26.

The protein belongs to the plant thionin (TC 1.C.44) family. 4 C-C subfamily.

It localises to the secreted. Its function is as follows. Thionins are small plant proteins which are toxic to animal cells. They seem to exert their toxic effect at the level of the cell membrane. Their precise function is not known. In Helleborus purpurascens (Purple hellebore), this protein is Hellethionin-D.